Reading from the N-terminus, the 1009-residue chain is MLRFIPSSAKARALRRSAVTAYRLNRLTCLSSLQQNRTFATQPTDDFLTGGAADYVDEMYDAWKKDPNSVHASWQAYFKNVQERGVSPSKAFQAPPLLDYADSYTALDSSLINGNNYADIDVGIYMKVQLLVRAYQSRGHHLAKLDPLGINVNHNRPSELTLEHYGFTESDLNRTIHLGPGILPNFREAGRKTMTLREIVETCEKIYCGSFAVEFTHISSRKRSNWILSHLETPTPFRYSHDQKIMIFDRLSWADSFERFLFTKFPNDKRFGLEGCEAMVPGMKALIDRSVDEGISNIVIGMAHRGRLNLLHNIVRKPAQAIFSEFRGTQDPDDEGSGDVKYHLGMNYQRPTPSGKRVSLSLVANPSHLEAEDPVVLGKVRAIQHYTSDEASHEQSMGILIHGDAAFAAQGVVYETFGLHALPGYSTGGTVHIVINNQIGFTTDPRFARSTPYCTDIAKSMEAPIFHVNGDDVEAVTFICQLAADWRKAFKTDVVVDIVCYRRHGHNETDQPSFTQPRMYKAIAKHPPTFKIYTQQLLQEKTVSKAEVDAQEKRVWDILESSFESSKNYKSDHREWLSNPWVGFASPKDLMTKILPSYPTGVNIDTLKQIGKALYTLPEGFDAHRNLKRILNNRNKSISSGEGIDMPTAEALAFGTLLEEGHHVRVSGQDVERGTFSQRHAVLHDQSSENVYIPLNHLSPNQASFVIRNSSLSEYGVLGFEYGYSLSSPNALVVWEAQFGDFANNAQCIIDQFIAAGETKWLQRTGIVLSLPHGYDGQGPEHSSARMERYLQLCNEDPREFPSEEKLQRQHQDCNIQAIYVTKPSQYFHALRRNIHRQFRKPLVIFFSKSLLRHPAARSTIDEFDEKHGFKLILEEEEHGKSILPPEKIEKLIICSGQVWVALSKAREENKIDNIAITRVEQLHPFGWKQMAANISQYPNLKEIIWCQEEPLNAGAWTYMEPRIYTILKHLGRDLPVRYAGRPPSASVAAGNKQQHLAEQEQFLNDALL.

Residues methionine 1–phenylalanine 39 constitute a mitochondrion transit peptide. The thiamine diphosphate site is built by arginine 305, aspartate 404, asparagine 437, isoleucine 439, and glutamine 669. Mg(2+) is bound by residues aspartate 404, asparagine 437, and isoleucine 439.

It belongs to the alpha-ketoglutarate dehydrogenase family. Thiamine diphosphate serves as cofactor. Mg(2+) is required as a cofactor.

Its subcellular location is the mitochondrion matrix. It carries out the reaction N(6)-[(R)-lipoyl]-L-lysyl-[protein] + 2-oxoglutarate + H(+) = N(6)-[(R)-S(8)-succinyldihydrolipoyl]-L-lysyl-[protein] + CO2. Catabolite repressed. Functionally, the 2-oxoglutarate dehydrogenase complex catalyzes the overall conversion of 2-oxoglutarate to succinyl-CoA and CO(2). It contains multiple copies of three enzymatic components: 2-oxoglutarate dehydrogenase (E1), dihydrolipoamide succinyltransferase (E2) and lipoamide dehydrogenase (E3). In Schizosaccharomyces pombe (strain 972 / ATCC 24843) (Fission yeast), this protein is 2-oxoglutarate dehydrogenase, mitochondrial (kgd1).